A 947-amino-acid polypeptide reads, in one-letter code: Serine/threonine-protein kinase PKH2 (947 aa).

A compositionally biased stretch (basic residues) spans 1 to 14 (MHKFRYSLHQHYSK). Disordered stretches follow at residues 1–43 (MHKF…SSSS), 108–132 (SLGN…LSSH), and 162–212 (FNHL…NEEN). The span at 108 to 117 (SLGNTTNETG) shows a compositional bias: polar residues. Residues 187 to 198 (NTEEEENNDDTD) are compositionally biased toward acidic residues. The segment covering 199–212 (EIPKSETLKQNEEN) has biased composition (basic and acidic residues). The region spanning 240–502 (FKFGKELGEG…IPEIQKHYFF (263 aa)) is the Protein kinase domain. ATP-binding positions include 250 to 252 (SYS) and K269. The segment at 271-316 (LDKRHIIKEKKVKYVNIEKHALNRLSNRLGVISLYFTFQDKDSLYF) is PIF-pocket. ATP contacts are provided by residues 319 to 321 (DYA) and E325. D364 acts as the Proton acceptor in catalysis. Positions 368 and 382 each coordinate ATP. 2 stretches are compositionally biased toward low complexity: residues 550 to 579 (VKKS…KGSS) and 618 to 632 (SSTS…SNSN). Disordered regions lie at residues 550 to 598 (VKKS…STEK), 611 to 644 (KPAT…QQDY), 660 to 686 (SVGS…IHQQ), and 794 to 816 (NMKR…ASTS). A compositionally biased stretch (basic and acidic residues) spans 802-811 (DSKKSMDIER).

It belongs to the protein kinase superfamily. AGC Ser/Thr protein kinase family. PDPK1 subfamily.

It is found in the nucleus. The protein localises to the cytoplasm. Its subcellular location is the cell cortex. The enzyme catalyses L-seryl-[protein] + ATP = O-phospho-L-seryl-[protein] + ADP + H(+). The catalysed reaction is L-threonyl-[protein] + ATP = O-phospho-L-threonyl-[protein] + ADP + H(+). In terms of biological role, serine/threonine-protein kinase which is part sphingolipid-mediated signaling pathway that is required for the internalization step of endocytosis by regulating eisosome assembly and organization, and modulating the organization of the plasma membrane. Phosphorylates and activates PKC1. Activates YPK1 and YPK2, 2 components of signaling cascade required for maintenance of cell wall integrity. Required for stress-induced P-body assembly and regulates global mRNA decay at the deadenylation step. This chain is Serine/threonine-protein kinase PKH2, found in Candida albicans (strain SC5314 / ATCC MYA-2876) (Yeast).